The following is a 182-amino-acid chain: Probable RNA 2'-phosphotransferase (182 aa).

It belongs to the KptA/TPT1 family.

Functionally, removes the 2'-phosphate from RNA via an intermediate in which the phosphate is ADP-ribosylated by NAD followed by a presumed transesterification to release the RNA and generate ADP-ribose 1''-2''-cyclic phosphate (APPR&gt;P). May function as an ADP-ribosylase. The chain is Probable RNA 2'-phosphotransferase from Pseudomonas fluorescens (strain ATCC BAA-477 / NRRL B-23932 / Pf-5).